Consider the following 304-residue polypeptide: Pyridoxal 5'-phosphate synthase subunit PdxS (304 aa).

D34 is a D-ribose 5-phosphate binding site. The Schiff-base intermediate with D-ribose 5-phosphate role is filled by K91. A D-ribose 5-phosphate-binding site is contributed by G163. R175 is a D-glyceraldehyde 3-phosphate binding site. D-ribose 5-phosphate is bound by residues G224 and 245 to 246; that span reads GS.

It belongs to the PdxS/SNZ family. In the presence of PdxT, forms a dodecamer of heterodimers.

It carries out the reaction aldehydo-D-ribose 5-phosphate + D-glyceraldehyde 3-phosphate + L-glutamine = pyridoxal 5'-phosphate + L-glutamate + phosphate + 3 H2O + H(+). It functions in the pathway cofactor biosynthesis; pyridoxal 5'-phosphate biosynthesis. In terms of biological role, catalyzes the formation of pyridoxal 5'-phosphate from ribose 5-phosphate (RBP), glyceraldehyde 3-phosphate (G3P) and ammonia. The ammonia is provided by the PdxT subunit. Can also use ribulose 5-phosphate and dihydroxyacetone phosphate as substrates, resulting from enzyme-catalyzed isomerization of RBP and G3P, respectively. In Streptomyces avermitilis (strain ATCC 31267 / DSM 46492 / JCM 5070 / NBRC 14893 / NCIMB 12804 / NRRL 8165 / MA-4680), this protein is Pyridoxal 5'-phosphate synthase subunit PdxS.